A 145-amino-acid chain; its full sequence is uncharacterized protein (145 aa).

The chain crosses the membrane as a helical span at residues Ile-4–Asn-24.

It localises to the membrane. This is an uncharacterized protein from Methanocaldococcus jannaschii (strain ATCC 43067 / DSM 2661 / JAL-1 / JCM 10045 / NBRC 100440) (Methanococcus jannaschii).